The primary structure comprises 283 residues: Pantothenate synthetase (283 aa).

31 to 38 (MGALHDGH) serves as a coordination point for ATP. Residue histidine 38 is the Proton donor of the active site. Glutamine 62 provides a ligand contact to (R)-pantoate. Beta-alanine is bound at residue glutamine 62. ATP is bound at residue 148 to 151 (GKKD). Residue glutamine 154 participates in (R)-pantoate binding. ATP contacts are provided by residues valine 177 and 185–188 (KSSR).

The protein belongs to the pantothenate synthetase family. As to quaternary structure, homodimer.

The protein localises to the cytoplasm. The enzyme catalyses (R)-pantoate + beta-alanine + ATP = (R)-pantothenate + AMP + diphosphate + H(+). The protein operates within cofactor biosynthesis; (R)-pantothenate biosynthesis; (R)-pantothenate from (R)-pantoate and beta-alanine: step 1/1. In terms of biological role, catalyzes the condensation of pantoate with beta-alanine in an ATP-dependent reaction via a pantoyl-adenylate intermediate. The sequence is that of Pantothenate synthetase from Staphylococcus aureus (strain bovine RF122 / ET3-1).